Here is a 201-residue protein sequence, read N- to C-terminus: Proteasome subunit beta type-2 (201 aa).

Residue M1 is modified to N-acetylmethionine.

This sequence belongs to the peptidase T1B family. The 26S proteasome consists of a 20S proteasome core and two 19S regulatory subunits. The 20S proteasome core is a barrel-shaped complex made of 28 subunits that are arranged in four stacked rings. The two outer rings are each formed by seven alpha subunits, and the two inner rings are formed by seven beta subunits. The proteolytic activity is exerted by three beta-subunits PSMB5, PSMB6 and PSMB7. As to quaternary structure, (Microbial infection) Interacts with HIV-1 protein Tat.

The protein resides in the cytoplasm. Its subcellular location is the nucleus. In terms of biological role, non-catalytic component of the 20S core proteasome complex involved in the proteolytic degradation of most intracellular proteins. This complex plays numerous essential roles within the cell by associating with different regulatory particles. Associated with two 19S regulatory particles, forms the 26S proteasome and thus participates in the ATP-dependent degradation of ubiquitinated proteins. The 26S proteasome plays a key role in the maintenance of protein homeostasis by removing misfolded or damaged proteins that could impair cellular functions, and by removing proteins whose functions are no longer required. Associated with the PA200 or PA28, the 20S proteasome mediates ubiquitin-independent protein degradation. This type of proteolysis is required in several pathways including spermatogenesis (20S-PA200 complex) or generation of a subset of MHC class I-presented antigenic peptides (20S-PA28 complex). The protein is Proteasome subunit beta type-2 of Homo sapiens (Human).